Consider the following 198-residue polypeptide: MSKVLVLKSSILGGYSQSALLVDYLIGKWEKQGATITVRDLAGKDVLPMVDGEIASGLRGGAELTARQQEMLDLSNALVEELKANDTIVITAPMYNFNIPTQLKNWIDFVARAGVTFTYTENGPKGLVEGKRAVLITTRGGAHKDGPTDHMVPFLKTFLGFIGITDVDVVYAEALNMGPEANQKGISEAKASIDKLAV.

FMN-binding positions include serine 10, 16 to 18, 94 to 97, and 138 to 141; these read SQS, MYNF, and TRGG.

This sequence belongs to the azoreductase type 1 family. In terms of assembly, homodimer. Requires FMN as cofactor.

It catalyses the reaction 2 a quinone + NADH + H(+) = 2 a 1,4-benzosemiquinone + NAD(+). The catalysed reaction is N,N-dimethyl-1,4-phenylenediamine + anthranilate + 2 NAD(+) = 2-(4-dimethylaminophenyl)diazenylbenzoate + 2 NADH + 2 H(+). Its function is as follows. Quinone reductase that provides resistance to thiol-specific stress caused by electrophilic quinones. Also exhibits azoreductase activity. Catalyzes the reductive cleavage of the azo bond in aromatic azo compounds to the corresponding amines. This chain is FMN-dependent NADH:quinone oxidoreductase, found in Shewanella oneidensis (strain ATCC 700550 / JCM 31522 / CIP 106686 / LMG 19005 / NCIMB 14063 / MR-1).